Reading from the N-terminus, the 202-residue chain is GTP cyclohydrolase 1 (202 aa).

Zn(2+)-binding residues include C90, H93, and C163.

The protein belongs to the GTP cyclohydrolase I family. In terms of assembly, toroid-shaped homodecamer, composed of two pentamers of five dimers.

It carries out the reaction GTP + H2O = 7,8-dihydroneopterin 3'-triphosphate + formate + H(+). Its pathway is cofactor biosynthesis; 7,8-dihydroneopterin triphosphate biosynthesis; 7,8-dihydroneopterin triphosphate from GTP: step 1/1. The protein is GTP cyclohydrolase 1 (folE) of Mycobacterium bovis (strain ATCC BAA-935 / AF2122/97).